The chain runs to 845 residues: Beta-mannosidase B (845 aa).

A glycan (N-linked (GlcNAc...) asparagine) is linked at Asn252. The active-site Proton donor is Glu432. N-linked (GlcNAc...) asparagine glycans are attached at residues Asn717 and Asn723.

This sequence belongs to the glycosyl hydrolase 2 family. Beta-mannosidase B subfamily.

It carries out the reaction Hydrolysis of terminal, non-reducing beta-D-mannose residues in beta-D-mannosides.. It participates in glycan metabolism; N-glycan degradation. Functionally, exoglycosidase that cleaves the single beta-linked mannose residue from the non-reducing end of beta-mannosidic oligosaccharides of various complexity and length. Prefers mannobiose over mannotriose and has no activity against polymeric mannan. Is also severely restricted by galactosyl substitutions at the +1 subsite. This is Beta-mannosidase B (mndB) from Aspergillus fumigatus (strain CBS 144.89 / FGSC A1163 / CEA10) (Neosartorya fumigata).